The sequence spans 751 residues: Palmitoyltransferase ZDHHC8B (751 aa).

Residues 1–13 (MPNSVGKRFKPTK) lie on the Cytoplasmic side of the membrane. The chain crosses the membrane as a helical span at residues 14 to 34 (YIPVSTAATLLVGSTTLFFVF). Topologically, residues 35-41 (TCPWLTK) are extracellular. A helical transmembrane segment spans residues 42–62 (AVSPVVPLYNGIVFLFVLANF). The Cytoplasmic segment spans residues 63–148 (SMATFMDPGV…NCIGRRNYRY (86 aa)). The DHHC domain occupies 104–154 (KWCATCHFYRPPRCSHCSVCDNCVEEFDHHCPWVNNCIGRRNYRYFFLFLL). The active-site S-palmitoyl cysteine intermediate is the C134. The helical transmembrane segment at 149-169 (FFLFLLSLSVHMVGVFSFGLL) threads the bilayer. Residues 170–185 (FVLHHLETLSALHTTV) are Extracellular-facing. A helical membrane pass occupies residues 186-206 (TLVVMCVTGLFFIPVMGLTGF). At 207 to 751 (HMVLVARGRT…VGGTTYEISV (545 aa)) the chain is on the cytoplasmic side. 5 disordered regions span residues 293–346 (RSKS…PSTP), 437–461 (CTPL…SPGT), 633–659 (RSSA…GMNR), 666–685 (RSPV…SPSY), and 703–736 (HLGT…HTSV). The span at 326 to 338 (SQLTSSEESSLSS) shows a compositional bias: low complexity. Polar residues-rich tracts occupy residues 633 to 651 (RSSA…TSLH), 669 to 681 (VHQS…SVPR), and 724 to 733 (GTPSGTPSRH).

The protein belongs to the DHHC palmitoyltransferase family. ERF2/ZDHHC9 subfamily.

It localises to the golgi apparatus membrane. Its subcellular location is the mitochondrion membrane. It carries out the reaction L-cysteinyl-[protein] + hexadecanoyl-CoA = S-hexadecanoyl-L-cysteinyl-[protein] + CoA. Functionally, palmitoyltransferase that catalyzes the addition of palmitate onto various protein substrates and therefore function in several unrelated biological processes. This is Palmitoyltransferase ZDHHC8B from Danio rerio (Zebrafish).